Consider the following 437-residue polypeptide: ATP-dependent RNA helicase RhlB (437 aa).

Residues 9–37 (QKFADLGLKPQVTEGLEKKGFEYCTPIQA) carry the Q motif motif. Residues 40–219 (LPVLLTGQDI…FEHMHNPEHV (180 aa)) enclose the Helicase ATP-binding domain. 53-60 (AQTGTGKT) lines the ATP pocket. Positions 165 to 168 (DEAD) match the DEAD box motif. The Helicase C-terminal domain occupies 245 to 390 (ALLQTLIEEE…VSDYDASALI (146 aa)). Residues 395–437 (APLRMRAPRTQQRRTNTGGTRSGNRKPQGRRPRQPRQSAPKQS) are disordered. Residues 403–413 (RTQQRRTNTGG) are compositionally biased toward low complexity. The segment covering 417–428 (GNRKPQGRRPRQ) has biased composition (basic residues).

The protein belongs to the DEAD box helicase family. RhlB subfamily. In terms of assembly, component of the RNA degradosome, which is a multiprotein complex involved in RNA processing and mRNA degradation.

Its subcellular location is the cytoplasm. It catalyses the reaction ATP + H2O = ADP + phosphate + H(+). DEAD-box RNA helicase involved in RNA degradation. Has RNA-dependent ATPase activity and unwinds double-stranded RNA. The protein is ATP-dependent RNA helicase RhlB of Vibrio campbellii (strain ATCC BAA-1116).